The following is a 339-amino-acid chain: Phenylalanine--tRNA ligase alpha subunit (339 aa).

Glutamate 250 serves as a coordination point for Mg(2+).

It belongs to the class-II aminoacyl-tRNA synthetase family. Phe-tRNA synthetase alpha subunit type 1 subfamily. Tetramer of two alpha and two beta subunits. Mg(2+) is required as a cofactor.

The protein resides in the cytoplasm. It catalyses the reaction tRNA(Phe) + L-phenylalanine + ATP = L-phenylalanyl-tRNA(Phe) + AMP + diphosphate + H(+). The polypeptide is Phenylalanine--tRNA ligase alpha subunit (Flavobacterium johnsoniae (strain ATCC 17061 / DSM 2064 / JCM 8514 / BCRC 14874 / CCUG 350202 / NBRC 14942 / NCIMB 11054 / UW101) (Cytophaga johnsonae)).